The following is a 441-amino-acid chain: Dolichyl-diphosphooligosaccharide--protein glycosyltransferase 48 kDa subunit (441 aa).

An N-terminal signal peptide occupies residues 1–28 (MKMVPRLAVRAWPLCGLLLAALGCVCAS). Topologically, residues 29–412 (GPRTLVLLDN…YERFIPSAYP (384 aa)) are lumenal. A helical transmembrane segment spans residues 413-432 (YYASAFSMMAGLFLFSVVFL). Residues 433–441 (HMKEKEKSD) are Cytoplasmic-facing.

This sequence belongs to the DDOST 48 kDa subunit family. Component of the oligosaccharyltransferase (OST) complex. OST exists in two different complex forms which contain common core subunits RPN1, RPN2, OST48, OST4, DAD1 and TMEM258, either STT3A or STT3B as catalytic subunits, and form-specific accessory subunits. STT3A complex assembly occurs through the formation of 3 subcomplexes. Subcomplex 1 contains RPN1 and TMEM258, subcomplex 2 contains the STT3A-specific subunits STT3A, DC2/OSTC, and KCP2 as well as the core subunit OST4, and subcomplex 3 contains RPN2, DAD1, and OST48. The STT3A complex can form stable complexes with the Sec61 complex or with both the Sec61 and TRAP complexes. Interacts with SMIM22.

The protein resides in the endoplasmic reticulum membrane. The protein operates within protein modification; protein glycosylation. Subunit of the oligosaccharyl transferase (OST) complex that catalyzes the initial transfer of a defined glycan (Glc(3)Man(9)GlcNAc(2) in eukaryotes) from the lipid carrier dolichol-pyrophosphate to an asparagine residue within an Asn-X-Ser/Thr consensus motif in nascent polypeptide chains, the first step in protein N-glycosylation. N-glycosylation occurs cotranslationally and the complex associates with the Sec61 complex at the channel-forming translocon complex that mediates protein translocation across the endoplasmic reticulum (ER). All subunits are required for a maximal enzyme activity. Required for the assembly of both SST3A- and SS3B-containing OST complexes. The chain is Dolichyl-diphosphooligosaccharide--protein glycosyltransferase 48 kDa subunit from Rattus norvegicus (Rat).